We begin with the raw amino-acid sequence, 315 residues long: HVA22-like protein h (315 aa).

The interval 148–315 (PKPKPKEKKQ…RKARSAGAPR (168 aa)) is disordered. Residues 173–190 (ATSQAASSNPQVRLQSKK) show a composition bias toward polar residues. A compositionally biased stretch (pro residues) spans 234–248 (PPGPPPPPPPPPPSP).

Belongs to the DP1 family.

In Arabidopsis thaliana (Mouse-ear cress), this protein is HVA22-like protein h (HVA22H).